The sequence spans 185 residues: Large ribosomal subunit protein uL5m (185 aa).

Belongs to the universal ribosomal protein uL5 family.

It localises to the mitochondrion. This Brassica napus (Rape) protein is Large ribosomal subunit protein uL5m (RPL5).